The primary structure comprises 178 residues: Large ribosomal subunit protein uL6 (178 aa).

It belongs to the universal ribosomal protein uL6 family. As to quaternary structure, part of the 50S ribosomal subunit.

Its function is as follows. This protein binds to the 23S rRNA, and is important in its secondary structure. It is located near the subunit interface in the base of the L7/L12 stalk, and near the tRNA binding site of the peptidyltransferase center. This chain is Large ribosomal subunit protein uL6, found in Helicobacter acinonychis (strain Sheeba).